A 382-amino-acid chain; its full sequence is Norsolorinic acid reductase B (382 aa).

D64 lines the NADP(+) pocket. Y69 serves as the catalytic Proton donor. H143 serves as a coordination point for substrate. NADP(+)-binding positions include 173–174 (SD), Q199, 228–238 (GVLNQGRFRTE), and 302–310 (RKVDHLTGV).

It belongs to the aldo/keto reductase family. Aldo/keto reductase 2 subfamily.

It participates in mycotoxin biosynthesis; aflatoxin biosynthesis. Functionally, norsolorinic acid reductase; part of the gene cluster that mediates the biosynthesis of aflatoxins, a group of polyketide-derived furanocoumarins, and part of the most toxic and carcinogenic compounds among the known mycotoxins. The four major aflatoxins produced by A.parasiticus are aflatoxin B1 (AFB1), aflatoxin B2 (AFB2), aflatoxin G1 (AFG1) and aflatoxin G2 (AFG2). Within the aflatoxin pathway, the norsolorinic acid reductase aflE may play a role in the conversion of norsolorinic acid (NOR) to averantin (AVN). The biosynthesis of aflatoxins begins with the norsolorinic acid synthase aflC that combines a hexanoyl starter unit produced by the fatty acid synthase aflA/aflB and 7 malonyl-CoA extender units to synthesize the precursor NOR. The second step is the conversion of NOR to averantin and requires the norsolorinic acid ketoreductase aflD, which catalyzes the dehydration of norsolorinic acid to form (1'S)-averantin. The norsolorinic acid reductases aflE and aflF may also play a role in the conversion of NOR to AVN. The cytochrome P450 monooxygenase aflG then catalyzes the hydroxylation of AVN to 5'hydroxyaverantin (HAVN). The next step is performed by the 5'-hydroxyaverantin dehydrogenase aflH that transforms HAVN to 5'-oxoaverantin (OAVN) which is further converted to averufin (AVF) by aflK that plays a dual role in the pathway, as a 5'-oxoaverantin cyclase that mediates conversion of 5'-oxoaverantin, as well as a versicolorin B synthase in a later step in the pathway. The averufin oxidase aflI catalyzes the conversion of AVF to versiconal hemiacetal acetate (VHA). VHA is then the substrate for the versiconal hemiacetal acetate esterase aflJ to yield versiconal (VAL). Versicolorin B synthase aflK then converts VAL to versicolorin B (VERB) by closing the bisfuran ring of aflatoxin which is required for DNA-binding, thus giving to aflatoxin its activity as a mutagen. Then, the activity of the versicolorin B desaturase aflL leads to versicolorin A (VERA). A branch point starts from VERB since it can also be converted to dihydrodemethylsterigmatocystin (DMDHST), probably also by aflL, VERA being a precursor for aflatoxins B1 and G1, and DMDHST for aflatoxins B2 and G2. Next, the versicolorin reductase aflM and the cytochrome P450 monooxygenase aflN are involved in conversion of VERA to demethylsterigmatocystin (DMST). AflX and aflY seem also involved in this step, through probable aflX-mediated epoxide ring-opening step following versicolorin A oxidation and aflY-mediated Baeyer-Villiger oxidation required for the formation of the xanthone ring. The methyltransferase aflO then leads to the modification of DMST to sterigmatocystin (ST), and of DMDHST to dihydrosterigmatocystin (DHST). Both ST and DHST are then substrates of the O-methyltransferase aflP to yield O-methylsterigmatocystin (OMST) and dihydro-O-methylsterigmatocystin (DHOMST), respectively. Finally OMST is converted to aflatoxins B1 and G1, and DHOMST to aflatoxins B2 and G2, via the action of several enzymes including O-methylsterigmatocystin oxidoreductase aflQ, the cytochrome P450 monooxygenase aflU, but also the NADH-dependent flavin oxidoreductase nadA which is specifically required for the synthesis of AFG1. The polypeptide is Norsolorinic acid reductase B (Aspergillus parasiticus (strain ATCC 56775 / NRRL 5862 / SRRC 143 / SU-1)).